A 172-amino-acid chain; its full sequence is Protein-export protein SecB (172 aa).

Belongs to the SecB family. In terms of assembly, homotetramer, a dimer of dimers. One homotetramer interacts with 1 SecA dimer.

It localises to the cytoplasm. Its function is as follows. One of the proteins required for the normal export of preproteins out of the cell cytoplasm. It is a molecular chaperone that binds to a subset of precursor proteins, maintaining them in a translocation-competent state. It also specifically binds to its receptor SecA. The chain is Protein-export protein SecB from Stenotrophomonas maltophilia (strain K279a).